A 221-amino-acid chain; its full sequence is MLTGKLVTFEGPDGAGKTSALNAIVAKLQPQLGDRLVVTREPGGNQISEAIRKIILDRHNTAMDDRTEALLYAAARRQHIVQTIQPALQNDQLVLCDRYIDSSVAYQGAGRGIGEQAVYDMNQFATAGLTADLTLYFDVDAAVGLNRIQQHRQNEINRLDVEALSFHHRVQAAYLRLLADHPDRIKRVDASQPLDQVVTQALEIMASQLPTYVASKGGEDQ.

11 to 18 (GPDGAGKT) contacts ATP.

This sequence belongs to the thymidylate kinase family.

The catalysed reaction is dTMP + ATP = dTDP + ADP. Phosphorylation of dTMP to form dTDP in both de novo and salvage pathways of dTTP synthesis. The protein is Thymidylate kinase of Lactiplantibacillus plantarum (strain ATCC BAA-793 / NCIMB 8826 / WCFS1) (Lactobacillus plantarum).